The chain runs to 123 residues: Small ribosomal subunit protein uS12 (123 aa).

At Asp89 the chain carries 3-methylthioaspartic acid.

Belongs to the universal ribosomal protein uS12 family. Part of the 30S ribosomal subunit. Contacts proteins S8 and S17. May interact with IF1 in the 30S initiation complex.

In terms of biological role, with S4 and S5 plays an important role in translational accuracy. Its function is as follows. Interacts with and stabilizes bases of the 16S rRNA that are involved in tRNA selection in the A site and with the mRNA backbone. Located at the interface of the 30S and 50S subunits, it traverses the body of the 30S subunit contacting proteins on the other side and probably holding the rRNA structure together. The combined cluster of proteins S8, S12 and S17 appears to hold together the shoulder and platform of the 30S subunit. The chain is Small ribosomal subunit protein uS12 from Brucella anthropi (strain ATCC 49188 / DSM 6882 / CCUG 24695 / JCM 21032 / LMG 3331 / NBRC 15819 / NCTC 12168 / Alc 37) (Ochrobactrum anthropi).